Here is a 198-residue protein sequence, read N- to C-terminus: MSYYAFEGLIPVVHPDAFVHPSAVLIGDVIVGAGVYIGPLASLRGDYGRLILEAGSNLQDGCIMHGYCDTDTIVHENGHIGHGAILHGCVVGRDALVGMNSVIMDGAVIGEESIVAAMSFVKAGFQGEARQLLVGSPARVLRQVTDQELHWKRLNTKEYQDLAIRCRTGLSETKPLTQAEENRPRLKGTTDVKPKSAQ.

Residues 174–198 are disordered; it reads KPLTQAEENRPRLKGTTDVKPKSAQ. The segment covering 180–198 has biased composition (basic and acidic residues); the sequence is EENRPRLKGTTDVKPKSAQ.

This sequence belongs to the transferase hexapeptide repeat family.

The protein operates within amine and polyamine metabolism; carnitine metabolism. Overproduction of CaiE stimulates the activity of CaiB and CaiD. The chain is Carnitine operon protein CaiE from Salmonella dublin (strain CT_02021853).